Reading from the N-terminus, the 217-residue chain is Somatotropin (217 aa).

The signal sequence occupies residues 1–26; sequence MATGSRTSLLLAFTLLCLPQLKEAGA. Histidine 44 contacts Zn(2+). Cysteines 79 and 191 form a disulfide. At serine 132 the chain carries Phosphoserine. Residue glutamate 200 coordinates Zn(2+). An intrachain disulfide couples cysteine 208 to cysteine 215.

This sequence belongs to the somatotropin/prolactin family.

It is found in the secreted. Functionally, plays an important role in growth control. Its major role in stimulating body growth is to stimulate the liver and other tissues to secrete IGF1. It stimulates both the differentiation and proliferation of myoblasts. It also stimulates amino acid uptake and protein synthesis in muscle and other tissues. This chain is Somatotropin (GH1), found in Saimiri boliviensis boliviensis (Bolivian squirrel monkey).